Consider the following 140-residue polypeptide: Large ribosomal subunit protein uL11 (140 aa).

This sequence belongs to the universal ribosomal protein uL11 family. Part of the ribosomal stalk of the 50S ribosomal subunit. Interacts with L10 and the large rRNA to form the base of the stalk. L10 forms an elongated spine to which L12 dimers bind in a sequential fashion forming a multimeric L10(L12)X complex. Post-translationally, one or more lysine residues are methylated.

Its function is as follows. Forms part of the ribosomal stalk which helps the ribosome interact with GTP-bound translation factors. The protein is Large ribosomal subunit protein uL11 of Enterococcus faecalis (strain ATCC 700802 / V583).